The primary structure comprises 160 residues: Major strawberry allergen Fra a 1.04 (160 aa).

It belongs to the BetVI family. Phosphorylated in vivo. Phosphorylation prevents its activity as ribonuclease. Highly expressed in roots. Expressed a low levels in ripe red fruits.

Possesses ribonuclease activity in vitro. The protein is Major strawberry allergen Fra a 1.04 of Fragaria ananassa (Strawberry).